The primary structure comprises 67 residues: MSVLPVFVMFGLSFPPVFIELIISLMLFWLVKRVLTPSGIYDLVWHPALFNTALYCCVFYLVSRLLV.

A run of 2 helical transmembrane segments spans residues 3–23 (VLPV…ELII) and 43–63 (LVWH…YLVS).

It belongs to the AaeX family.

It is found in the cell membrane. The sequence is that of Protein AaeX from Pantoea vagans (strain C9-1) (Pantoea agglomerans (strain C9-1)).